The following is a 456-amino-acid chain: Exodeoxyribonuclease 7 large subunit (456 aa).

The protein belongs to the XseA family. Heterooligomer composed of large and small subunits.

It localises to the cytoplasm. The catalysed reaction is Exonucleolytic cleavage in either 5'- to 3'- or 3'- to 5'-direction to yield nucleoside 5'-phosphates.. In terms of biological role, bidirectionally degrades single-stranded DNA into large acid-insoluble oligonucleotides, which are then degraded further into small acid-soluble oligonucleotides. The chain is Exodeoxyribonuclease 7 large subunit from Lactobacillus delbrueckii subsp. bulgaricus (strain ATCC 11842 / DSM 20081 / BCRC 10696 / JCM 1002 / NBRC 13953 / NCIMB 11778 / NCTC 12712 / WDCM 00102 / Lb 14).